A 348-amino-acid chain; its full sequence is Phosphate acyltransferase (348 aa).

The protein belongs to the PlsX family. As to quaternary structure, homodimer. Probably interacts with PlsY.

The protein resides in the cytoplasm. The enzyme catalyses a fatty acyl-[ACP] + phosphate = an acyl phosphate + holo-[ACP]. Its pathway is lipid metabolism; phospholipid metabolism. Its function is as follows. Catalyzes the reversible formation of acyl-phosphate (acyl-PO(4)) from acyl-[acyl-carrier-protein] (acyl-ACP). This enzyme utilizes acyl-ACP as fatty acyl donor, but not acyl-CoA. The protein is Phosphate acyltransferase of Francisella philomiragia subsp. philomiragia (strain ATCC 25017 / CCUG 19701 / FSC 153 / O#319-036).